Consider the following 365-residue polypeptide: Sulfate/thiosulfate import ATP-binding protein CysA (365 aa).

Residues 3 to 237 (IEIANIKKSF…PATRFVLEFM (235 aa)) form the ABC transporter domain. Position 35 to 42 (35 to 42 (GPSGSGKT)) interacts with ATP.

This sequence belongs to the ABC transporter superfamily. Sulfate/tungstate importer (TC 3.A.1.6) family. In terms of assembly, the complex is composed of two ATP-binding proteins (CysA), two transmembrane proteins (CysT and CysW) and a solute-binding protein (CysP).

It is found in the cell inner membrane. It carries out the reaction sulfate(out) + ATP + H2O = sulfate(in) + ADP + phosphate + H(+). The enzyme catalyses thiosulfate(out) + ATP + H2O = thiosulfate(in) + ADP + phosphate + H(+). In terms of biological role, part of the ABC transporter complex CysAWTP involved in sulfate/thiosulfate import. Responsible for energy coupling to the transport system. This chain is Sulfate/thiosulfate import ATP-binding protein CysA, found in Escherichia coli O6:H1 (strain CFT073 / ATCC 700928 / UPEC).